A 417-amino-acid chain; its full sequence is Serine protease hepsin (417 aa).

The Cytoplasmic portion of the chain corresponds to 1 to 23 (MAQKEGGRTVPCCSRPKVAALTA). The chain crosses the membrane as a helical; Signal-anchor for type II membrane protein span at residues 24–44 (GTLLLLTAIGAASWAIVAVLL). The Extracellular portion of the chain corresponds to 45-417 (RSDQEPLYPV…SEASGMVTQL (373 aa)). One can recognise an SRCR domain in the interval 54-151 (VQVSSADARL…RGRFLATICQ (98 aa)). Intrachain disulfides connect C77/C140, C90/C150, C119/C138, C153/C277, C188/C204, C291/C359, C322/C338, and C349/C381. N112 carries N-linked (GlcNAc...) asparagine glycosylation. The Peptidase S1 domain maps to 163–405 (IVGGRDTSLG…FREWIFQAIK (243 aa)). Residues H203 and D257 each act as charge relay system in the active site. S353 serves as the catalytic Charge relay system.

It belongs to the peptidase S1 family.

It is found in the membrane. It catalyses the reaction Cleavage after basic amino-acid residues, with Arg strongly preferred to Lys.. Its function is as follows. Plays an essential role in cell growth and maintenance of cell morphology. May mediate the activating cleavage of HGF and MST1/HGFL. Plays a role in the proteolytic processing of ACE2. The chain is Serine protease hepsin (HPN) from Pongo abelii (Sumatran orangutan).